We begin with the raw amino-acid sequence, 171 residues long: ATP synthase subunit b (171 aa).

The chain crosses the membrane as a helical span at residues 26 to 46; it reads INLVLVIALLVYFLKGFLGGI.

The protein belongs to the ATPase B chain family. As to quaternary structure, F-type ATPases have 2 components, F(1) - the catalytic core - and F(0) - the membrane proton channel. F(1) has five subunits: alpha(3), beta(3), gamma(1), delta(1), epsilon(1). F(0) has four main subunits: a(1), b(1), b'(1) and c(10-14). The alpha and beta chains form an alternating ring which encloses part of the gamma chain. F(1) is attached to F(0) by a central stalk formed by the gamma and epsilon chains, while a peripheral stalk is formed by the delta, b and b' chains.

Its subcellular location is the cellular thylakoid membrane. F(1)F(0) ATP synthase produces ATP from ADP in the presence of a proton or sodium gradient. F-type ATPases consist of two structural domains, F(1) containing the extramembraneous catalytic core and F(0) containing the membrane proton channel, linked together by a central stalk and a peripheral stalk. During catalysis, ATP synthesis in the catalytic domain of F(1) is coupled via a rotary mechanism of the central stalk subunits to proton translocation. In terms of biological role, component of the F(0) channel, it forms part of the peripheral stalk, linking F(1) to F(0). In Synechococcus sp. (strain RCC307), this protein is ATP synthase subunit b.